The sequence spans 254 residues: RxLR effector protein CRE5 (254 aa).

Residues 1–19 (MQTIQLIIFVAFVLSRAAA) form the signal peptide. The N-linked (GlcNAc...) asparagine glycan is linked to N49. A RxLR-dEER motif is present at residues 53 to 63 (RSLRQHEGEDR). In terms of domain architecture, Nudix hydrolase spans 191–254 (SRWLSAGVVT…MEEGGVCRAL (64 aa)). A Nudix box motif is present at residues 228–249 (GGWDRGEKIKKAALREVMEEGG).

It in the N-terminal section; belongs to the RxLR effector family. This sequence in the C-terminal section; belongs to the Nudix hydrolase family.

Its subcellular location is the secreted. It is found in the host cytoplasm. The protein resides in the host nucleus. The protein localises to the host nucleolus. Effector that is involved in host plant infection. Contributes to virulence during the early infection stage, by inhibiting plant defense responses induced by both PAMP-triggered immunity (PTI) and effector-triggered immunity (ETI). The protein is RxLR effector protein CRE5 of Phytophthora infestans (strain T30-4) (Potato late blight agent).